A 72-amino-acid polypeptide reads, in one-letter code: Translation initiation factor IF-1 1 (72 aa).

Residues 1–72 (MSKDDVIQMQ…TRARIVFRSK (72 aa)) form the S1-like domain.

The protein belongs to the IF-1 family. In terms of assembly, component of the 30S ribosomal translation pre-initiation complex which assembles on the 30S ribosome in the order IF-2 and IF-3, IF-1 and N-formylmethionyl-tRNA(fMet); mRNA recruitment can occur at any time during PIC assembly.

Its subcellular location is the cytoplasm. Its function is as follows. One of the essential components for the initiation of protein synthesis. Stabilizes the binding of IF-2 and IF-3 on the 30S subunit to which N-formylmethionyl-tRNA(fMet) subsequently binds. Helps modulate mRNA selection, yielding the 30S pre-initiation complex (PIC). Upon addition of the 50S ribosomal subunit IF-1, IF-2 and IF-3 are released leaving the mature 70S translation initiation complex. The sequence is that of Translation initiation factor IF-1 1 from Bordetella avium (strain 197N).